We begin with the raw amino-acid sequence, 117 residues long: uncharacterized protein (117 aa).

The signal sequence occupies residues 1–23; sequence MVSEAEFMAALAKFAETSATASA.

This is an uncharacterized protein from Archaeoglobus fulgidus (strain ATCC 49558 / DSM 4304 / JCM 9628 / NBRC 100126 / VC-16).